Consider the following 330-residue polypeptide: Anthranilate phosphoribosyltransferase (330 aa).

5-phospho-alpha-D-ribose 1-diphosphate is bound by residues G75, 78-79 (GD), T83, 85-88 (NVST), 103-111 (KHGNRAASS), and A115. G75 serves as a coordination point for anthranilate. Mg(2+) is bound at residue S87. N106 contributes to the anthranilate binding site. R161 contributes to the anthranilate binding site. D220 and E221 together coordinate Mg(2+).

Belongs to the anthranilate phosphoribosyltransferase family. In terms of assembly, homodimer. The cofactor is Mg(2+).

It catalyses the reaction N-(5-phospho-beta-D-ribosyl)anthranilate + diphosphate = 5-phospho-alpha-D-ribose 1-diphosphate + anthranilate. It participates in amino-acid biosynthesis; L-tryptophan biosynthesis; L-tryptophan from chorismate: step 2/5. Catalyzes the transfer of the phosphoribosyl group of 5-phosphorylribose-1-pyrophosphate (PRPP) to anthranilate to yield N-(5'-phosphoribosyl)-anthranilate (PRA). The polypeptide is Anthranilate phosphoribosyltransferase (Novosphingobium aromaticivorans (strain ATCC 700278 / DSM 12444 / CCUG 56034 / CIP 105152 / NBRC 16084 / F199)).